We begin with the raw amino-acid sequence, 1538 residues long: Ferredoxin-dependent glutamate synthase (1538 aa).

Cys34 (for GATase activity) is an active-site residue. Residues 34 to 431 (CGVGFIADVN…PGQMISVDIF (398 aa)) enclose the Glutamine amidotransferase type-2 domain. An FMN-binding site is contributed by 1109–1166 (LSEVHQLLAENQLRDRVTLRVDGGLRTGSDIVLAAIMGAEEFGFGTVAMIATGCIMAR). Cys1162, Cys1168, and Cys1173 together coordinate [3Fe-4S] cluster.

It belongs to the glutamate synthase family. In terms of assembly, monomer. Requires [3Fe-4S] cluster as cofactor. It depends on FAD as a cofactor. The cofactor is FMN.

It is found in the plastid. It localises to the chloroplast stroma. It carries out the reaction 2 oxidized [2Fe-2S]-[ferredoxin] + 2 L-glutamate = L-glutamine + 2 reduced [2Fe-2S]-[ferredoxin] + 2-oxoglutarate + 2 H(+). The protein operates within amino-acid biosynthesis; L-glutamate biosynthesis via GLT pathway; L-glutamate from 2-oxoglutarate and L-glutamine (ferredoxin route): step 1/1. It participates in energy metabolism; nitrogen metabolism. This Pyropia yezoensis (Susabi-nori) protein is Ferredoxin-dependent glutamate synthase (gltB).